The primary structure comprises 389 residues: Chitinase-3-like protein 1 (389 aa).

The N-terminal stretch at 1–29 (MHTSTEARMGMRAALTGFAVLMLLQSCSA) is a signal peptide. The 360-residue stretch at 30-389 (YKLVCYFTSW…LTNAIKDALA (360 aa)) folds into the GH18 domain. Cysteines 34 and 59 form a disulfide. A glycan (N-linked (GlcNAc...) asparagine) is linked at Asn-68. Residues 79-80 (EW), 106-109 (GGWK), Tyr-150, and 213-216 (MTYD) each bind chitin. Residues Cys-309 and Cys-372 are joined by a disulfide bond. The segment at 333-347 (QWVGYEDKESVKNKV) is important for AKT1 activation and IL8 production. Residue Trp-361 coordinates chitin.

The protein belongs to the glycosyl hydrolase 18 family. As to quaternary structure, monomer. In terms of tissue distribution, detected in lung in pulmonary macrophages and alveolar type 2 cells and in bronchoalveolar lavage (BAL) fluids. Expressed in mammary tumor cells (at protein level). Expressed in lung. Not detected in non-inflammatory colon.

It is found in the secreted. The protein localises to the extracellular space. Its subcellular location is the cytoplasm. It localises to the endoplasmic reticulum. Functionally, carbohydrate-binding lectin with a preference for chitin. Has no chitinase activity. May play a role in tissue remodeling and in the capacity of cells to respond to and cope with changes in their environment. Plays a role in T-helper cell type 2 (Th2) inflammatory response and IL-13-induced inflammation, regulating allergen sensitization, inflammatory cell apoptosis, dendritic cell accumulation and M2 macrophage differentiation. Facilitates invasion of pathogenic enteric bacteria into colonic mucosa and lymphoid organs. Mediates activation of AKT1 signaling pathway and subsequent IL8 production in colonic epithelial cells. Regulates antibacterial responses in lung by contributing to macrophage bacterial killing, controlling bacterial dissemination and augmenting host tolerance. Also regulates hyperoxia-induced injury, inflammation and epithelial apoptosis in lung. The polypeptide is Chitinase-3-like protein 1 (Chi3l1) (Mus musculus (Mouse)).